Reading from the N-terminus, the 139-residue chain is uncharacterized protein (139 aa).

A helical transmembrane segment spans residues 77–97 (YCFFFFLVLFLNGIIATRGKA).

It is found in the mitochondrion membrane. This is an uncharacterized protein from Arabidopsis thaliana (Mouse-ear cress).